A 379-amino-acid chain; its full sequence is Galactose-1-phosphate uridylyltransferase (379 aa).

The segment covering 1–15 (MSQSGADPEQRQQAS) has biased composition (polar residues). The segment at 1–20 (MSQSGADPEQRQQASEADAM) is disordered. Position 75 (Cys-75) interacts with Zn(2+). UDP-alpha-D-glucose-binding positions include Ala-81, 97–98 (ND), and Asn-173. Residue His-184 coordinates Zn(2+). His-186 serves as the catalytic Tele-UMP-histidine intermediate. A UDP-alpha-D-glucose-binding site is contributed by Gln-188. Glu-202, His-301, His-319, and His-321 together coordinate Zn(2+). UDP-alpha-D-glucose contacts are provided by residues 334-337 (KFMV) and 339-340 (YE).

The protein belongs to the galactose-1-phosphate uridylyltransferase type 1 family. As to quaternary structure, homodimer. It depends on Zn(2+) as a cofactor.

The catalysed reaction is alpha-D-galactose 1-phosphate + UDP-alpha-D-glucose = alpha-D-glucose 1-phosphate + UDP-alpha-D-galactose. Its pathway is carbohydrate metabolism; galactose metabolism. In terms of biological role, plays an important role in galactose metabolism. The protein is Galactose-1-phosphate uridylyltransferase (Galt) of Rattus norvegicus (Rat).